We begin with the raw amino-acid sequence, 61 residues long: Disintegrin rubistatin (61 aa).

The Disintegrin domain occupies 1 to 61 (NPCCDAATCK…ADCPRNGLYG (61 aa)). Intrachain disulfides connect Cys3-Cys26, Cys17-Cys23, Cys22-Cys47, and Cys35-Cys54. Positions 39-41 (MVD) match the Cell attachment site; atypical (MVD) motif.

This sequence belongs to the venom metalloproteinase (M12B) family. P-II subfamily. P-IIa sub-subfamily. As to quaternary structure, monomer. In terms of tissue distribution, expressed by the venom gland.

It localises to the secreted. Its function is as follows. Recombinant disintegrin rubistatin inhibits ADP-induced platelet aggregation. In addition, it strongly induces apoptosis, and inhibits cell migration and proliferation of the human cancer cell line SK-Mel-28. The polypeptide is Disintegrin rubistatin (Crotalus ruber ruber (Red diamond rattlesnake)).